The following is a 1102-amino-acid chain: GPI inositol-deacylase (1102 aa).

A disordered region spans residues Met-1–Val-90. Residues Gly-58–Trp-70 show a composition bias toward polar residues. N-linked (GlcNAc...) asparagine glycosylation is present at Asn-66. Positions Thr-72–Pro-83 are enriched in low complexity. A helical transmembrane segment spans residues Pro-121–Leu-141. Ser-308 is a catalytic residue. 2 helical membrane passes run Leu-744–Met-764 and Ser-790–Thr-810. N-linked (GlcNAc...) asparagine glycosylation is present at Asn-824. Helical transmembrane passes span Val-867 to Gly-887, Ile-914 to Ile-934, Ser-964 to Ala-984, Val-1001 to Pro-1021, Met-1033 to Leu-1053, and Leu-1056 to Leu-1076.

The protein belongs to the GPI inositol-deacylase family.

The protein localises to the endoplasmic reticulum membrane. Its function is as follows. Involved in inositol deacylation of GPI-anchored proteins which plays important roles in the quality control and ER-associated degradation of GPI-anchored proteins. In Aspergillus oryzae (strain ATCC 42149 / RIB 40) (Yellow koji mold), this protein is GPI inositol-deacylase (bst1).